Reading from the N-terminus, the 304-residue chain is Homoserine kinase (304 aa).

90–100 contacts ATP; that stretch reads PLARGLGSSAS.

The protein belongs to the GHMP kinase family. Homoserine kinase subfamily.

It localises to the cytoplasm. It carries out the reaction L-homoserine + ATP = O-phospho-L-homoserine + ADP + H(+). It participates in amino-acid biosynthesis; L-threonine biosynthesis; L-threonine from L-aspartate: step 4/5. Functionally, catalyzes the ATP-dependent phosphorylation of L-homoserine to L-homoserine phosphate. This Staphylococcus aureus (strain MSSA476) protein is Homoserine kinase.